Reading from the N-terminus, the 398-residue chain is NADH-quinone oxidoreductase subunit D (398 aa).

The protein belongs to the complex I 49 kDa subunit family. NDH-1 is composed of 14 different subunits. Subunits NuoB, C, D, E, F, and G constitute the peripheral sector of the complex.

It is found in the cell inner membrane. The enzyme catalyses a quinone + NADH + 5 H(+)(in) = a quinol + NAD(+) + 4 H(+)(out). NDH-1 shuttles electrons from NADH, via FMN and iron-sulfur (Fe-S) centers, to quinones in the respiratory chain. The immediate electron acceptor for the enzyme in this species is believed to be ubiquinone. Couples the redox reaction to proton translocation (for every two electrons transferred, four hydrogen ions are translocated across the cytoplasmic membrane), and thus conserves the redox energy in a proton gradient. The sequence is that of NADH-quinone oxidoreductase subunit D from Caulobacter vibrioides (strain ATCC 19089 / CIP 103742 / CB 15) (Caulobacter crescentus).